The sequence spans 1386 residues: DNA-directed RNA polymerase subunit beta'' (1386 aa).

Zn(2+) is bound by residues C220, C289, C296, and C299.

This sequence belongs to the RNA polymerase beta' chain family. RpoC2 subfamily. In terms of assembly, in plastids the minimal PEP RNA polymerase catalytic core is composed of four subunits: alpha, beta, beta', and beta''. When a (nuclear-encoded) sigma factor is associated with the core the holoenzyme is formed, which can initiate transcription. Zn(2+) is required as a cofactor.

It is found in the plastid. The protein localises to the chloroplast. The catalysed reaction is RNA(n) + a ribonucleoside 5'-triphosphate = RNA(n+1) + diphosphate. In terms of biological role, DNA-dependent RNA polymerase catalyzes the transcription of DNA into RNA using the four ribonucleoside triphosphates as substrates. In Marchantia polymorpha (Common liverwort), this protein is DNA-directed RNA polymerase subunit beta''.